The following is a 217-amino-acid chain: Probable GTP-binding protein EngB (217 aa).

Residues 27-201 (EGIEVAFAGR…REKLDTWFSE (175 aa)) form the EngB-type G domain. Residues 35–42 (GRSNAGKS), 62–66 (GRTQL), 80–83 (DLPG), 147–150 (TKAD), and 180–182 (FSS) contribute to the GTP site. Mg(2+)-binding residues include serine 42 and threonine 64.

Belongs to the TRAFAC class TrmE-Era-EngA-EngB-Septin-like GTPase superfamily. EngB GTPase family. Requires Mg(2+) as cofactor.

In terms of biological role, necessary for normal cell division and for the maintenance of normal septation. This chain is Probable GTP-binding protein EngB, found in Yersinia enterocolitica serotype O:8 / biotype 1B (strain NCTC 13174 / 8081).